A 1197-amino-acid polypeptide reads, in one-letter code: Probable DNA polymerase (1197 aa).

The protein belongs to the DNA polymerase type-B family.

Its subcellular location is the mitochondrion. The enzyme catalyses DNA(n) + a 2'-deoxyribonucleoside 5'-triphosphate = DNA(n+1) + diphosphate. The protein is Probable DNA polymerase of Podospora anserina (Pleurage anserina).